A 1667-amino-acid chain; its full sequence is Androglobin (1667 aa).

Positions 1–11 (MASKQTKKKEV) are enriched in basic residues. 3 disordered regions span residues 1-45 (MASK…KGKF), 347-387 (SLTT…KFSL), and 540-566 (GSDLPSVSETDETATHSQTDLSQITKA). Residues 70–411 (KDKTGKSPVF…SLSDCSSAIQ (342 aa)) form the Calpain catalytic domain. The segment covering 353 to 384 (APEKSDKVPKEKADARDIGKKRSKDGEKEKFK) has biased composition (basic and acidic residues). Over residues 554–566 (THSQTDLSQITKA) the composition is skewed to polar residues. In terms of domain architecture, Globin; C-terminal part spans 763–890 (HICSMVSFVI…EEVSLVEWLD (128 aa)). Glutamine 792 and histidine 824 together coordinate heme b. In terms of domain architecture, IQ spans 906 to 935 (EVAAAIKIQAMWRGTYVRLLMKARIPDTKE). The region spanning 936–968 (NISVADTLQKVWAVLEMNLEQYAVSLLRLMFKS) is the Globin; N-terminal part domain. Disordered regions lie at residues 1297–1355 (INLG…QQED) and 1420–1522 (TSDA…RSPT). Over residues 1301-1315 (SPDSHTISEGQKSSV) the composition is skewed to polar residues. Basic and acidic residues-rich tracts occupy residues 1325–1340 (EKSSEKEKTAKEKQAP) and 1433–1450 (TKPKEEVETAARGVKEPN). Polar residues predominate over residues 1451–1468 (SKNSAGSESKEMTQTGSG). Residues 1487-1498 (STSSESGGVSSP) show a composition bias toward low complexity. Over residues 1499–1511 (GKEEREQSTRKEN) the composition is skewed to basic and acidic residues. Positions 1512–1522 (IQTGPRTRSPT) are enriched in polar residues. The stretch at 1588-1629 (QEERLKLKDEVLDMYKEMQDSLDEARQKIFDIREEYRNKLLE) forms a coiled coil. The tract at residues 1646-1667 (KLETEKMTPAPDTQKKKKGKKK) is disordered.

It in the central section; belongs to the globin family. The protein in the N-terminal section; belongs to the peptidase C2 family. Interacts with septin SEPT10; contributes to in vitro proteolytic cleavage of SEPT10 in a calmodulin-dependent manner. Interacts with CFAP69. Interacts with SPEF2. May interact with calmodulin.

It localises to the cell projection. The protein resides in the cilium. Its subcellular location is the flagellum. Probable chimeric globin with a bis-histidyl six-coordinate heme-iron atom through which it could bind dioxygen, carbon monoxide and nitric oxide. Required for sperm flagellum formation and maturation of elongating spermatids, thus playing an essential role in male fertility. This is Androglobin from Homo sapiens (Human).